The chain runs to 415 residues: MKHLPAQDEQVFNAIKNERERQQTKIELIASENFVSEAVMEAQGSVLTNKYAEGYPGKRYYGGCEHVDVVEDIARDRAKEIFGAEHVNVQPHSGAQANMAVYFTILEQGDTVLGMNLSHGGHLTHGSPVNFSGVQYNFVEYGVDKETQYIDYDDVREKALAHKPKLIVAGASAYPRTIDFKKFREIADEVGAYFMVDMAHIAGLVAAGLHPNPVPYADFVTTTTHKTLRGPRGGMILCREEFGKKIDKSIFPGIQGGPLMHVIAAKAVSFGEVLQDDFKTYAQNVISNAKRLAEALTKEGIQLVSGGTDNHLILVDLRSLGLTGKVAEHVLDEIGITSNKNAIPYDPEKPFVTSGIRLGTAAVTSRGFDGDALEEVGAIIALALKNHEDEGKLEEARQRVAALTDKFPLYKELDY.

Residues Leu-117 and 121–123 (GHL) each bind (6S)-5,6,7,8-tetrahydrofolate. The residue at position 226 (Lys-226) is an N6-(pyridoxal phosphate)lysine. Position 241 (Glu-241) interacts with (6S)-5,6,7,8-tetrahydrofolate.

The protein belongs to the SHMT family. In terms of assembly, homodimer. Pyridoxal 5'-phosphate serves as cofactor.

The protein resides in the cytoplasm. It carries out the reaction (6R)-5,10-methylene-5,6,7,8-tetrahydrofolate + glycine + H2O = (6S)-5,6,7,8-tetrahydrofolate + L-serine. It functions in the pathway one-carbon metabolism; tetrahydrofolate interconversion. Its pathway is amino-acid biosynthesis; glycine biosynthesis; glycine from L-serine: step 1/1. Catalyzes the reversible interconversion of serine and glycine with tetrahydrofolate (THF) serving as the one-carbon carrier. This reaction serves as the major source of one-carbon groups required for the biosynthesis of purines, thymidylate, methionine, and other important biomolecules. Also exhibits THF-independent aldolase activity toward beta-hydroxyamino acids, producing glycine and aldehydes, via a retro-aldol mechanism. This chain is Serine hydroxymethyltransferase, found in Bacillus subtilis (strain 168).